Here is a 365-residue protein sequence, read N- to C-terminus: DNA replication and repair protein RecF (365 aa).

An ATP-binding site is contributed by 30 to 37; the sequence is GQNGSGKT.

The protein belongs to the RecF family.

Its subcellular location is the cytoplasm. Its function is as follows. The RecF protein is involved in DNA metabolism; it is required for DNA replication and normal SOS inducibility. RecF binds preferentially to single-stranded, linear DNA. It also seems to bind ATP. This chain is DNA replication and repair protein RecF, found in Shewanella halifaxensis (strain HAW-EB4).